A 259-amino-acid chain; its full sequence is Ribonuclease HII (259 aa).

The RNase H type-2 domain occupies Thr-70–Glu-258. Asp-76, Glu-77, and Asp-168 together coordinate a divalent metal cation.

Belongs to the RNase HII family. Requires Mn(2+) as cofactor. Mg(2+) is required as a cofactor.

It is found in the cytoplasm. The enzyme catalyses Endonucleolytic cleavage to 5'-phosphomonoester.. Functionally, endonuclease that specifically degrades the RNA of RNA-DNA hybrids. This is Ribonuclease HII from Streptococcus pneumoniae (strain P1031).